We begin with the raw amino-acid sequence, 309 residues long: Coenzyme PQQ synthesis protein B (309 aa).

This sequence belongs to the PqqB family.

Its pathway is cofactor biosynthesis; pyrroloquinoline quinone biosynthesis. May be involved in the transport of PQQ or its precursor to the periplasm. The protein is Coenzyme PQQ synthesis protein B of Bradyrhizobium diazoefficiens (strain JCM 10833 / BCRC 13528 / IAM 13628 / NBRC 14792 / USDA 110).